We begin with the raw amino-acid sequence, 203 residues long: Putative 3-methyladenine DNA glycosylase (203 aa).

The protein belongs to the DNA glycosylase MPG family.

The chain is Putative 3-methyladenine DNA glycosylase from Clostridium tetani (strain Massachusetts / E88).